We begin with the raw amino-acid sequence, 960 residues long: Leucine-rich repeat receptor-like serine/threonine-protein kinase SKM1 (960 aa).

Residues 1-29 form the signal peptide; the sequence is MSTSHHHHHPPYLITTLFFLFLNFSCLHA. Over 30-634 the chain is Extracellular; the sequence is NELELLLSFK…VRKRSTKSWW (605 aa). Cys61 and Cys68 are oxidised to a cystine. 6 N-linked (GlcNAc...) asparagine glycosylation sites follow: Asn70, Asn83, Asn103, Asn108, Asn129, and Asn134. LRR repeat units lie at residues 71-96, 97-120, 122-146, 149-168, 169-194, 196-216, 217-240, 241-264, 265-288, 290-312, 313-336, 338-360, 361-384, 386-408, 409-432, 434-454, 455-477, 478-501, 503-525, 526-549, 550-573, and 575-598; these read ISRV…TFRL, PFLQ…IFTT, SPSL…FLPN, TLDL…IGVF, SNLR…NLSR, EFLT…LGKM, KNLK…IGGL, SSLN…LGDL, KKLE…IFSL, NLIS…VAQM, QSLE…VTSL, RLKV…LGKH, NNLT…LCDS, HLTK…LGMC, QSLE…FTKL, LVNF…TWDM, PQLE…FSRS, KRLK…LMTF, EIMD…LSSC, KNLV…FAEF, QVLS…LGNI, and SLVQ…AFLA. N-linked (GlcNAc...) asparagine glycosylation occurs at Asn191. A CLE45 peptide binding motif is present at residues 221–226; that stretch reads WIYLGY. Residues Asn228 and Asn252 are each glycosylated (N-linked (GlcNAc...) asparagine). The N-linked (GlcNAc...) asparagine glycan is linked to Asn324. 2 N-linked (GlcNAc...) asparagine glycosylation sites follow: Asn362 and Asn372. Asn537 carries N-linked (GlcNAc...) asparagine glycosylation. N-linked (GlcNAc...) asparagine glycans are attached at residues Asn580 and Asn600. Residues 635–655 form a helical membrane-spanning segment; sequence LIITSTFAAFLAVLVSGFFIV. Over 656-960 the chain is Cytoplasmic; that stretch reads LVFQRTHNVL…TYLSKILSLA (305 aa). In terms of domain architecture, Protein kinase spans 691–953; the sequence is FTVNTILSSL…SSSSSCTTYL (263 aa). Thr692 is subject to Phosphothreonine. ATP is bound by residues 697-705 and Lys717; that span reads LSSLKDQNV. Tyr834 carries the phosphotyrosine modification.

The protein belongs to the protein kinase superfamily. Ser/Thr protein kinase family. As to quaternary structure, self-interacts. Binds to CLE45 present in the pistil, particularly under relatively high temperature (at 30 degrees Celsius). As to expression, expressed in pollen grains and roots vascular tissues. Present in roots.

It is found in the cell membrane. The catalysed reaction is L-seryl-[protein] + ATP = O-phospho-L-seryl-[protein] + ADP + H(+). The enzyme catalyses L-threonyl-[protein] + ATP = O-phospho-L-threonyl-[protein] + ADP + H(+). Its function is as follows. Receptor with a serine/threonine-protein kinase activity. Together with SKM2, LRR-rich receptor-like kinase (LRR-RLK) required for male fertility by the perception of CLE43 and CLE45 peptides and the transduction of their promoting action in pollen tubes, especially under relatively high temperature (at 30 degrees Celsius), thus conferring tolerance against high temperature probably through the maintenance of mitochondrial activity. Seems to not be involved in the perception of CLE45 peptide in roots. The sequence is that of Leucine-rich repeat receptor-like serine/threonine-protein kinase SKM1 from Arabidopsis thaliana (Mouse-ear cress).